Consider the following 702-residue polypeptide: Vacuolar protein sorting-associated protein 52 homolog (702 aa).

The stretch at 505 to 535 (KEMGAKMEAVLENSEDSIEQLLTRMSAMQQT) forms a coiled coil.

Belongs to the VPS52 family. In terms of assembly, component of the Golgi-associated retrograde protein (GARP) complex, also called VFT (VPS fifty-three) complex, composed of vps-51, vps-52, vps-53 and vps-54. Within the complex interacts with vps-53 and vps-54. Interacts with the small GTPases rab-6.1 and rab-6.2. As to expression, ubiquitously expressed, with particularly strong expression in neuronal cells. Specifically expressed in head and tail neurons and in the pharynx and ventral cord motor neurons.

It is found in the golgi apparatus. Its subcellular location is the trans-Golgi network. The protein localises to the perikaryon. The protein resides in the cytoplasm. It localises to the perinuclear region. Acts as a component of the GARP complex that is involved in retrograde transport from early and late endosomes to the trans-Golgi network (TGN). The GARP complex facilitates tethering as well as SNARE complex assembly at the Golgi. Plays a role in the trafficking of cargo to dense-core vesicles, probably through association with the EARP-interacting protein eipr-1. Important for neuronal function. The sequence is that of Vacuolar protein sorting-associated protein 52 homolog from Caenorhabditis elegans.